We begin with the raw amino-acid sequence, 313 residues long: 4-hydroxy-3-methylbut-2-enyl diphosphate reductase (313 aa).

Cysteine 14 is a binding site for [4Fe-4S] cluster. The (2E)-4-hydroxy-3-methylbut-2-enyl diphosphate site is built by histidine 43 and histidine 76. Residues histidine 43 and histidine 76 each coordinate dimethylallyl diphosphate. Residues histidine 43 and histidine 76 each contribute to the isopentenyl diphosphate site. Cysteine 98 is a binding site for [4Fe-4S] cluster. Histidine 126 provides a ligand contact to (2E)-4-hydroxy-3-methylbut-2-enyl diphosphate. Histidine 126 contributes to the dimethylallyl diphosphate binding site. Isopentenyl diphosphate is bound at residue histidine 126. The active-site Proton donor is glutamate 128. Residue threonine 166 coordinates (2E)-4-hydroxy-3-methylbut-2-enyl diphosphate. Cysteine 196 provides a ligand contact to [4Fe-4S] cluster. Positions 224, 225, 226, and 269 each coordinate (2E)-4-hydroxy-3-methylbut-2-enyl diphosphate. Dimethylallyl diphosphate-binding residues include serine 224, serine 225, asparagine 226, and serine 269. Isopentenyl diphosphate contacts are provided by serine 224, serine 225, asparagine 226, and serine 269.

Belongs to the IspH family. [4Fe-4S] cluster serves as cofactor.

It carries out the reaction isopentenyl diphosphate + 2 oxidized [2Fe-2S]-[ferredoxin] + H2O = (2E)-4-hydroxy-3-methylbut-2-enyl diphosphate + 2 reduced [2Fe-2S]-[ferredoxin] + 2 H(+). The catalysed reaction is dimethylallyl diphosphate + 2 oxidized [2Fe-2S]-[ferredoxin] + H2O = (2E)-4-hydroxy-3-methylbut-2-enyl diphosphate + 2 reduced [2Fe-2S]-[ferredoxin] + 2 H(+). Its pathway is isoprenoid biosynthesis; dimethylallyl diphosphate biosynthesis; dimethylallyl diphosphate from (2E)-4-hydroxy-3-methylbutenyl diphosphate: step 1/1. It functions in the pathway isoprenoid biosynthesis; isopentenyl diphosphate biosynthesis via DXP pathway; isopentenyl diphosphate from 1-deoxy-D-xylulose 5-phosphate: step 6/6. Catalyzes the conversion of 1-hydroxy-2-methyl-2-(E)-butenyl 4-diphosphate (HMBPP) into a mixture of isopentenyl diphosphate (IPP) and dimethylallyl diphosphate (DMAPP). Acts in the terminal step of the DOXP/MEP pathway for isoprenoid precursor biosynthesis. This chain is 4-hydroxy-3-methylbut-2-enyl diphosphate reductase, found in Tropheryma whipplei (strain TW08/27) (Whipple's bacillus).